The chain runs to 229 residues: Ribonuclease 3 (229 aa).

One can recognise an RNase III domain in the interval 4–133; that stretch reads WEELQESVGF…FIGALYLDNG (130 aa). Position 46 (Glu46) interacts with Mg(2+). Residue Asp50 is part of the active site. Positions 119 and 122 each coordinate Mg(2+). Residue Glu122 is part of the active site. Residues 159-228 form the DRBM domain; the sequence is DYKTQLQEIV…AQFAINQLTH (70 aa).

The protein belongs to the ribonuclease III family. Homodimer. The cofactor is Mg(2+).

Its subcellular location is the cytoplasm. The enzyme catalyses Endonucleolytic cleavage to 5'-phosphomonoester.. Digests double-stranded RNA. Involved in the processing of primary rRNA transcript to yield the immediate precursors to the large and small rRNAs (23S and 16S). Processes some mRNAs, and tRNAs when they are encoded in the rRNA operon. Processes pre-crRNA and tracrRNA of type II CRISPR loci if present in the organism. This is Ribonuclease 3 from Listeria monocytogenes serotype 4b (strain CLIP80459).